The chain runs to 220 residues: UPF0502 protein Pnap_3223 (220 aa).

Belongs to the UPF0502 family.

The protein is UPF0502 protein Pnap_3223 of Polaromonas naphthalenivorans (strain CJ2).